The chain runs to 61 residues: Small venom protein 1 (61 aa).

Residues 1-20 (MRCVAIFLVVICAFVLQALA) form the signal peptide.

As to expression, expressed by the venom gland.

The protein localises to the secreted. The chain is Small venom protein 1 from Pimpla hypochondriaca (Parasitoid wasp).